A 331-amino-acid chain; its full sequence is ATPase GET3 (331 aa).

32-39 serves as a coordination point for ATP; it reads KGGVGKTT. Aspartate 61 is an active-site residue. The ATP site is built by glutamate 235 and asparagine 262. Residues cysteine 273 and cysteine 276 each coordinate Zn(2+).

This sequence belongs to the arsA ATPase family. In terms of assembly, homodimer.

The protein resides in the cytoplasm. The protein localises to the endoplasmic reticulum. In terms of biological role, ATPase required for the post-translational delivery of tail-anchored (TA) proteins to the endoplasmic reticulum. Recognizes and selectively binds the transmembrane domain of TA proteins in the cytosol. This complex then targets to the endoplasmic reticulum by membrane-bound receptors, where the tail-anchored protein is released for insertion. This process is regulated by ATP binding and hydrolysis. ATP binding drives the homodimer towards the closed dimer state, facilitating recognition of newly synthesized TA membrane proteins. ATP hydrolysis is required for insertion. Subsequently, the homodimer reverts towards the open dimer state, lowering its affinity for the membrane-bound receptor, and returning it to the cytosol to initiate a new round of targeting. The polypeptide is ATPase GET3 (Malassezia globosa (strain ATCC MYA-4612 / CBS 7966) (Dandruff-associated fungus)).